Reading from the N-terminus, the 267-residue chain is Carboxy-S-adenosyl-L-methionine synthase (267 aa).

Over residues 1–11 the composition is skewed to polar residues; sequence MPNRDTQSQND. A disordered region spans residues 1–25; that stretch reads MPNRDTQSQNDTPRHSPEAAEPQRD. The span at 12–24 shows a compositional bias: basic and acidic residues; the sequence is TPRHSPEAAEPQR. Residues Y59, 84 to 86, 109 to 110, 137 to 138, N152, and R219 each bind S-adenosyl-L-methionine; these read GCS, DN, and DI.

This sequence belongs to the class I-like SAM-binding methyltransferase superfamily. Cx-SAM synthase family. As to quaternary structure, homodimer.

It carries out the reaction prephenate + S-adenosyl-L-methionine = carboxy-S-adenosyl-L-methionine + 3-phenylpyruvate + H2O. Functionally, catalyzes the conversion of S-adenosyl-L-methionine (SAM) to carboxy-S-adenosyl-L-methionine (Cx-SAM). This Yersinia pseudotuberculosis serotype O:1b (strain IP 31758) protein is Carboxy-S-adenosyl-L-methionine synthase.